Reading from the N-terminus, the 99-residue chain is Acylphosphatase (99 aa).

In terms of domain architecture, Acylphosphatase-like spans 5–97 (IRQVMVRGRV…YAGERFSILS (93 aa)). Active-site residues include Arg-20 and Asn-38.

The protein belongs to the acylphosphatase family.

The catalysed reaction is an acyl phosphate + H2O = a carboxylate + phosphate + H(+). The protein is Acylphosphatase (acyP) of Rhodopseudomonas palustris (strain BisB5).